Reading from the N-terminus, the 115-residue chain is Large ribosomal subunit protein bL20 (115 aa).

Belongs to the bacterial ribosomal protein bL20 family.

In terms of biological role, binds directly to 23S ribosomal RNA and is necessary for the in vitro assembly process of the 50S ribosomal subunit. It is not involved in the protein synthesizing functions of that subunit. This is Large ribosomal subunit protein bL20 from Prochlorococcus marinus (strain MIT 9515).